A 362-amino-acid chain; its full sequence is Forkhead box protein F (362 aa).

The segment at 19–70 (LDSTAPNNSHRTIKAENYFNEDEEDYNENSHEDSEDSKEDSDGQGCRSRKRK) is disordered. Acidic residues predominate over residues 37 to 57 (FNEDEEDYNENSHEDSEDSKE). The fork-head DNA-binding region spans 72 to 169 (KPPFSYIALI…EENGFRRRPR (98 aa)).

It is found in the nucleus. In terms of biological role, transcription factor that is required for cell fate of coelomocytes which are non-muscle mesodermal cells. Acts in concert with, and by activating expression of, the homeodomain gene ceh-34. Binds to the sequence motif 5'-ATAAA[T/C]A-3'. This chain is Forkhead box protein F, found in Caenorhabditis elegans.